The following is an 865-amino-acid chain: Protein translocase subunit SecA (865 aa).

Residues Gln-93, 111–115 (GEGKT), and Asp-501 contribute to the ATP site. Positions 841, 843, 852, and 853 each coordinate Zn(2+).

Belongs to the SecA family. As to quaternary structure, monomer and homodimer. Part of the essential Sec protein translocation apparatus which comprises SecA, SecYEG and auxiliary proteins SecDF-YajC and YidC. The cofactor is Zn(2+).

The protein resides in the cell inner membrane. It localises to the cytoplasm. It carries out the reaction ATP + H2O + cellular proteinSide 1 = ADP + phosphate + cellular proteinSide 2.. Part of the Sec protein translocase complex. Interacts with the SecYEG preprotein conducting channel. Has a central role in coupling the hydrolysis of ATP to the transfer of proteins into and across the cell membrane, serving as an ATP-driven molecular motor driving the stepwise translocation of polypeptide chains across the membrane. The protein is Protein translocase subunit SecA of Helicobacter pylori (strain ATCC 700392 / 26695) (Campylobacter pylori).